The following is a 181-amino-acid chain: Protein Syd (181 aa).

The protein belongs to the Syd family.

It localises to the cell inner membrane. Functionally, interacts with the SecY protein in vivo. May bind preferentially to an uncomplexed state of SecY, thus functioning either as a chelating agent for excess SecY in the cell or as a regulatory factor that negatively controls the translocase function. The sequence is that of Protein Syd from Escherichia fergusonii (strain ATCC 35469 / DSM 13698 / CCUG 18766 / IAM 14443 / JCM 21226 / LMG 7866 / NBRC 102419 / NCTC 12128 / CDC 0568-73).